Here is a 321-residue protein sequence, read N- to C-terminus: Beta-lactamase (321 aa).

Positions 1 to 30 (MEKNRKKQIVVLSIALVCIFILVFSLFHKS) are cleaved as a signal peptide. Residue serine 83 is the Acyl-ester intermediate of the active site. Residue 233-235 (KTG) participates in substrate binding.

Belongs to the class-A beta-lactamase family.

It catalyses the reaction a beta-lactam + H2O = a substituted beta-amino acid. Inhibited by clavulanic acid. Functionally, can hydrolyze cephalosporins, penicillins and also cefoxitin; but at a slow rate. The chain is Beta-lactamase (cfxA) from Phocaeicola vulgatus (Bacteroides vulgatus).